Consider the following 442-residue polypeptide: MSKTYHFIGIKGSGMSALALMLHQMGHKVQGSDVEKYYFTQRGLEQAGITILPFSEDNITPDMELIVGNAFRENNKEVAYALRHQIPFKRYHDFLGDFMKSFISFAVAGAHGKTSTTGLLSHVLKNITDTSYLIGDGTGRGSANAQYFVFESDEYERHFMPYHPEYSIITNIDFDHPDYFTGIADVRNAFNDYAKQVKKALFVYGEDDELKKIEAPAPIYYYGFEEGNDFIAYDITRTTNGSDFKVKHQGEVIGQFHVPAYGKHNILNATAVIANLFVAGIDMALVADHLKTFSGVKRRFTEKIINDTIIIDDFAHHPTEIVATIDAARQKYPSKEIVAIFQPHTFTRTIALLEDFACALNEADSVYLAQIYGSAREVDKGEVRVEDLAAKIIKPSQVVTVENVSPLLDHDNAVYVFMGAGDIQLYEHSFEELLANLTKNNQ.

Residue 109–115 coordinates ATP; it reads GAHGKTS.

This sequence belongs to the MurCDEF family.

It localises to the cytoplasm. It carries out the reaction UDP-N-acetyl-alpha-D-muramate + L-alanine + ATP = UDP-N-acetyl-alpha-D-muramoyl-L-alanine + ADP + phosphate + H(+). Its pathway is cell wall biogenesis; peptidoglycan biosynthesis. Its function is as follows. Cell wall formation. The protein is UDP-N-acetylmuramate--L-alanine ligase of Streptococcus pyogenes serotype M3 (strain SSI-1).